Here is a 353-residue protein sequence, read N- to C-terminus: Melanin-concentrating hormone receptor 1 (353 aa).

Residues 1–45 are Extracellular-facing; that stretch reads MDLQASLLSTGPNASNISDGQDNFTLAGPPPRTRSVSYINIIMPS. 3 N-linked (GlcNAc...) asparagine glycosylation sites follow: N13, N16, and N23. A helical transmembrane segment spans residues 46-66; that stretch reads VFGTICLLGIVGNSTVIFAVV. Residues 67-79 lie on the Cytoplasmic side of the membrane; it reads KKSKLHWCSNVPD. Residues 80–100 traverse the membrane as a helical segment; sequence IFIINLSVVDLLFLLGMPFMI. The Extracellular portion of the chain corresponds to 101–116; that stretch reads HQLMGNGVWHFGETMC. C116 and C194 form a disulfide bridge. Residues 117–139 traverse the membrane as a helical segment; the sequence is TLITAMDANSQFTSTYILTAMAI. Residues 140–161 lie on the Cytoplasmic side of the membrane; it reads DRYLATVHPISSTKFRKPSMAT. The chain crosses the membrane as a helical span at residues 162–182; the sequence is LVICLLWALSFISITPVWLYA. Residues 183 to 204 lie on the Extracellular side of the membrane; it reads RLIPFPGGAVGCGIRLPNPDTD. A helical transmembrane segment spans residues 205–225; that stretch reads LYWFTLYQFFLAFALPFVVIT. Topologically, residues 226–256 are cytoplasmic; the sequence is AAYVKILQRMTSSVAPASQRSIRLRTKRVTR. The chain crosses the membrane as a helical span at residues 257–277; sequence TAIAICLVFFVCWAPYYVLQL. At 278–294 the chain is on the extracellular side; the sequence is TQLSISRPTLTFVYLYN. The chain crosses the membrane as a helical span at residues 295–315; the sequence is AAISLGYANSCLNPFVYIVLC. Topologically, residues 316–353 are cytoplasmic; it reads ETFRKRLVLSVKPAAQGQLRTVSNAQTADEERTESKGT.

The protein belongs to the G-protein coupled receptor 1 family. As to quaternary structure, interacts with NCDN. Expressed predominantly in the brain. Expression in brain is negatively regulated by leptin. Also found in the epithelium of the tongue and kidney.

It localises to the cell membrane. In terms of biological role, receptor for melanin-concentrating hormone, coupled to both G proteins that inhibit adenylyl cyclase and G proteins that activate phosphoinositide hydrolysis. The chain is Melanin-concentrating hormone receptor 1 from Mus musculus (Mouse).